Here is a 300-residue protein sequence, read N- to C-terminus: Cation-efflux pump FieF (300 aa).

A run of 4 helical transmembrane segments spans residues 12-32, 39-59, 82-102, and 114-134; these read AAIAATAMASLLLLIKIFAWW, ILAALVDSLVDIGASLTNLLV, AALAQSMFISGSALFLFLTGI, and PGVGVIVTIVALICTIILVSF. Zn(2+) contacts are provided by Asp-45 and Asp-49. Residues His-153 and Asp-157 each coordinate Zn(2+). The next 2 helical transmembrane spans lie at 156-176 and 178-198; these read SDVMMNGAILLALGLSWYGWH and ADALFALGIGIYILYSALRMG.

This sequence belongs to the cation diffusion facilitator (CDF) transporter (TC 2.A.4) family. FieF subfamily. In terms of assembly, homodimer.

The protein resides in the cell inner membrane. The catalysed reaction is Zn(2+)(in) + H(+)(out) = Zn(2+)(out) + H(+)(in). The enzyme catalyses Cd(2+)(in) + H(+)(out) = Cd(2+)(out) + H(+)(in). It catalyses the reaction Fe(2+)(in) + H(+)(out) = Fe(2+)(out) + H(+)(in). Divalent metal cation transporter which exports Zn(2+), Cd(2+) and possibly Fe(2+). May be involved in zinc and iron detoxification by efflux. In Escherichia coli O157:H7 (strain EC4115 / EHEC), this protein is Cation-efflux pump FieF.